Reading from the N-terminus, the 439-residue chain is Xylose isomerase (439 aa).

Residues H103 and D106 contribute to the active site. 7 residues coordinate Mg(2+): E234, E270, H273, D298, D309, D311, and D341.

This sequence belongs to the xylose isomerase family. As to quaternary structure, homotetramer. Requires Mg(2+) as cofactor.

It is found in the cytoplasm. The enzyme catalyses alpha-D-xylose = alpha-D-xylulofuranose. The chain is Xylose isomerase from Bacteroides fragilis (strain ATCC 25285 / DSM 2151 / CCUG 4856 / JCM 11019 / LMG 10263 / NCTC 9343 / Onslow / VPI 2553 / EN-2).